A 447-amino-acid chain; its full sequence is UPF0210 protein LEUM_1180 (447 aa).

The protein belongs to the UPF0210 family. As to quaternary structure, homodimer.

This chain is UPF0210 protein LEUM_1180, found in Leuconostoc mesenteroides subsp. mesenteroides (strain ATCC 8293 / DSM 20343 / BCRC 11652 / CCM 1803 / JCM 6124 / NCDO 523 / NBRC 100496 / NCIMB 8023 / NCTC 12954 / NRRL B-1118 / 37Y).